A 464-amino-acid polypeptide reads, in one-letter code: ATP synthase subunit beta (464 aa).

154–161 (GGAGVGKT) lines the ATP pocket.

The protein belongs to the ATPase alpha/beta chains family. In terms of assembly, F-type ATPases have 2 components, CF(1) - the catalytic core - and CF(0) - the membrane proton channel. CF(1) has five subunits: alpha(3), beta(3), gamma(1), delta(1), epsilon(1). CF(0) has three main subunits: a(1), b(2) and c(9-12). The alpha and beta chains form an alternating ring which encloses part of the gamma chain. CF(1) is attached to CF(0) by a central stalk formed by the gamma and epsilon chains, while a peripheral stalk is formed by the delta and b chains.

It localises to the cell membrane. It catalyses the reaction ATP + H2O + 4 H(+)(in) = ADP + phosphate + 5 H(+)(out). Its function is as follows. Produces ATP from ADP in the presence of a proton gradient across the membrane. The catalytic sites are hosted primarily by the beta subunits. The polypeptide is ATP synthase subunit beta (Mycoplasmopsis synoviae (strain 53) (Mycoplasma synoviae)).